The chain runs to 142 residues: ATP synthase epsilon chain (142 aa).

This sequence belongs to the ATPase epsilon chain family. F-type ATPases have 2 components, CF(1) - the catalytic core - and CF(0) - the membrane proton channel. CF(1) has five subunits: alpha(3), beta(3), gamma(1), delta(1), epsilon(1). CF(0) has three main subunits: a, b and c.

The protein localises to the cell inner membrane. In terms of biological role, produces ATP from ADP in the presence of a proton gradient across the membrane. In Shewanella pealeana (strain ATCC 700345 / ANG-SQ1), this protein is ATP synthase epsilon chain.